Consider the following 874-residue polypeptide: Alanine--tRNA ligase (874 aa).

Zn(2+) is bound by residues H564, H568, C665, and H669.

It belongs to the class-II aminoacyl-tRNA synthetase family. The cofactor is Zn(2+).

It localises to the cytoplasm. The enzyme catalyses tRNA(Ala) + L-alanine + ATP = L-alanyl-tRNA(Ala) + AMP + diphosphate. Catalyzes the attachment of alanine to tRNA(Ala) in a two-step reaction: alanine is first activated by ATP to form Ala-AMP and then transferred to the acceptor end of tRNA(Ala). Also edits incorrectly charged Ser-tRNA(Ala) and Gly-tRNA(Ala) via its editing domain. The sequence is that of Alanine--tRNA ligase from Paraburkholderia phytofirmans (strain DSM 17436 / LMG 22146 / PsJN) (Burkholderia phytofirmans).